We begin with the raw amino-acid sequence, 545 residues long: Glucose-6-phosphate isomerase (545 aa).

The active-site Proton donor is the Glu351. Catalysis depends on residues His382 and Lys510.

Belongs to the GPI family.

It is found in the cytoplasm. The catalysed reaction is alpha-D-glucose 6-phosphate = beta-D-fructose 6-phosphate. Its pathway is carbohydrate biosynthesis; gluconeogenesis. The protein operates within carbohydrate degradation; glycolysis; D-glyceraldehyde 3-phosphate and glycerone phosphate from D-glucose: step 2/4. In terms of biological role, catalyzes the reversible isomerization of glucose-6-phosphate to fructose-6-phosphate. This is Glucose-6-phosphate isomerase from Helicobacter acinonychis (strain Sheeba).